Here is a 349-residue protein sequence, read N- to C-terminus: 4-hydroxythreonine-4-phosphate dehydrogenase (349 aa).

Positions 141 and 142 each coordinate substrate. H176, H221, and H276 together coordinate a divalent metal cation. Substrate contacts are provided by K284, N293, and R302.

It belongs to the PdxA family. Homodimer. Zn(2+) is required as a cofactor. Requires Mg(2+) as cofactor. Co(2+) serves as cofactor.

It is found in the cytoplasm. It catalyses the reaction 4-(phosphooxy)-L-threonine + NAD(+) = 3-amino-2-oxopropyl phosphate + CO2 + NADH. The protein operates within cofactor biosynthesis; pyridoxine 5'-phosphate biosynthesis; pyridoxine 5'-phosphate from D-erythrose 4-phosphate: step 4/5. Functionally, catalyzes the NAD(P)-dependent oxidation of 4-(phosphooxy)-L-threonine (HTP) into 2-amino-3-oxo-4-(phosphooxy)butyric acid which spontaneously decarboxylates to form 3-amino-2-oxopropyl phosphate (AHAP). This is 4-hydroxythreonine-4-phosphate dehydrogenase from Methylorubrum extorquens (strain PA1) (Methylobacterium extorquens).